The chain runs to 552 residues: Transcription factor lcsF (552 aa).

Disordered stretches follow at residues 1-132 (MAPA…DLDP), 169-209 (TSSY…ASLS), 232-258 (EATS…HWSS), and 297-349 (ELTS…QHGA). The segment at 31–55 (KDRKEKKRIQNRVAQRSYRSRMKAR) is basic motif. Residues 31–76 (KDRKEKKRIQNRVAQRSYRSRMKARLGELQSRLQAHEEQKAKEEAE) form the bZIP domain. Positions 56–63 (LGELQSRL) are leucine-zipper. Positions 64-79 (QAHEEQKAKEEAERCD) are enriched in basic and acidic residues. 2 stretches are compositionally biased toward polar residues: residues 98-119 (TPPS…NSAS) and 169-186 (TSSY…SLSQ). Residues 298–347 (LTSTGDLPNATWRPSQQFSGPETTPRSHNAENPTQQQSPINDDTPSTTQH) show a composition bias toward polar residues.

Belongs to the bZIP family.

The protein resides in the nucleus. Transcription factor that regulates the expression of the gene cluster that mediates the biosynthesis of the lipopeptide antibiotics leucinostatins that show extensive biological activities, including antimalarial, antiviral, antibacterial, antifungal, and antitumor activities, as well as phytotoxic. All 20 genes in the cluster are up-regulated to some extent by lcsF, with the exception of lcsL and lcsP, which are down-regulated. The sequence is that of Transcription factor lcsF from Purpureocillium lilacinum (Paecilomyces lilacinus).